The chain runs to 292 residues: Phosphatidylserine decarboxylase proenzyme (292 aa).

Catalysis depends on charge relay system; for autoendoproteolytic cleavage activity residues aspartate 89, histidine 146, and serine 252. Serine 252 acts as the Schiff-base intermediate with substrate; via pyruvic acid; for decarboxylase activity in catalysis. Serine 252 carries the pyruvic acid (Ser); by autocatalysis modification.

Belongs to the phosphatidylserine decarboxylase family. PSD-B subfamily. Prokaryotic type I sub-subfamily. As to quaternary structure, heterodimer of a large membrane-associated beta subunit and a small pyruvoyl-containing alpha subunit. Requires pyruvate as cofactor. In terms of processing, is synthesized initially as an inactive proenzyme. Formation of the active enzyme involves a self-maturation process in which the active site pyruvoyl group is generated from an internal serine residue via an autocatalytic post-translational modification. Two non-identical subunits are generated from the proenzyme in this reaction, and the pyruvate is formed at the N-terminus of the alpha chain, which is derived from the carboxyl end of the proenzyme. The autoendoproteolytic cleavage occurs by a canonical serine protease mechanism, in which the side chain hydroxyl group of the serine supplies its oxygen atom to form the C-terminus of the beta chain, while the remainder of the serine residue undergoes an oxidative deamination to produce ammonia and the pyruvoyl prosthetic group on the alpha chain. During this reaction, the Ser that is part of the protease active site of the proenzyme becomes the pyruvoyl prosthetic group, which constitutes an essential element of the active site of the mature decarboxylase.

The protein localises to the cell membrane. The enzyme catalyses a 1,2-diacyl-sn-glycero-3-phospho-L-serine + H(+) = a 1,2-diacyl-sn-glycero-3-phosphoethanolamine + CO2. Its pathway is phospholipid metabolism; phosphatidylethanolamine biosynthesis; phosphatidylethanolamine from CDP-diacylglycerol: step 2/2. Functionally, catalyzes the formation of phosphatidylethanolamine (PtdEtn) from phosphatidylserine (PtdSer). This is Phosphatidylserine decarboxylase proenzyme from Shewanella baltica (strain OS223).